Here is a 281-residue protein sequence, read N- to C-terminus: uncharacterized protein (281 aa).

This is an uncharacterized protein from Methanocaldococcus jannaschii (strain ATCC 43067 / DSM 2661 / JAL-1 / JCM 10045 / NBRC 100440) (Methanococcus jannaschii).